The chain runs to 308 residues: Isochorismatase domain-containing protein 1 (308 aa).

The protein belongs to the isochorismatase family.

The polypeptide is Isochorismatase domain-containing protein 1 (isoc1) (Xenopus tropicalis (Western clawed frog)).